The chain runs to 274 residues: 3-methyl-2-oxobutanoate hydroxymethyltransferase (274 aa).

2 residues coordinate Mg(2+): Asp54 and Asp93. Residues 54–55, Asp93, and Lys121 contribute to the 3-methyl-2-oxobutanoate site; that span reads DS. Glu123 contributes to the Mg(2+) binding site. Glu190 acts as the Proton acceptor in catalysis.

This sequence belongs to the PanB family. As to quaternary structure, homodecamer; pentamer of dimers. Mg(2+) serves as cofactor.

The protein resides in the cytoplasm. It catalyses the reaction 3-methyl-2-oxobutanoate + (6R)-5,10-methylene-5,6,7,8-tetrahydrofolate + H2O = 2-dehydropantoate + (6S)-5,6,7,8-tetrahydrofolate. It participates in cofactor biosynthesis; (R)-pantothenate biosynthesis; (R)-pantoate from 3-methyl-2-oxobutanoate: step 1/2. Its function is as follows. Catalyzes the reversible reaction in which hydroxymethyl group from 5,10-methylenetetrahydrofolate is transferred onto alpha-ketoisovalerate to form ketopantoate. This chain is 3-methyl-2-oxobutanoate hydroxymethyltransferase, found in Ralstonia nicotianae (strain ATCC BAA-1114 / GMI1000) (Ralstonia solanacearum).